A 394-amino-acid chain; its full sequence is QWRF motif-containing protein 7 (394 aa).

The tract at residues 1–171 (MATTGRRLRP…ESPVSKAKIR (171 aa)) is disordered. The segment covering 14 to 67 (NNNRSRTISSSISLPVSLNASLSSSTSSSSSSSPSNSSKRVMITRSQSTTRSSR) has biased composition (low complexity). Positions 85–96 (NSASRSQEINNG) are enriched in polar residues. The segment covering 97–110 (RSRESFARYLEQRT) has biased composition (basic and acidic residues). Polar residues-rich tracts occupy residues 111-120 (RGSPRSNASS) and 142-157 (TMKT…TSMC). Residues 211–214 (QWRF) carry the QWRF motif motif.

This sequence belongs to the QWRF family.

The chain is QWRF motif-containing protein 7 (QWRF7) from Arabidopsis thaliana (Mouse-ear cress).